The primary structure comprises 269 residues: Nuclear egress protein 2 (269 aa).

Residues 1–247 (MSRRTYVRSE…VWKLALPVAN (247 aa)) are Perinuclear space-facing. The chain crosses the membrane as a helical span at residues 248–268 (VTYALFIVIVLVVVLGAVLFW). Residue Lys269 is a topological domain, nuclear.

This sequence belongs to the herpesviridae NEC2 protein family. As to quaternary structure, forms a heterohexameric complex with NEC1. In terms of processing, phosphorylated.

The protein localises to the host nucleus inner membrane. Plays an essential role in virion nuclear egress, the first step of virion release from infected cell. Within the host nucleus, NEC1 interacts with the newly formed capsid through the vertexes and directs it to the inner nuclear membrane by associating with NEC2. Induces the budding of the capsid at the inner nuclear membrane as well as its envelopment into the perinuclear space. There, the NEC1/NEC2 complex promotes the fusion of the enveloped capsid with the outer nuclear membrane and the subsequent release of the viral capsid into the cytoplasm where it will reach the secondary budding sites in the host Golgi or trans-Golgi network. The chain is Nuclear egress protein 2 from Homo sapiens (Human).